We begin with the raw amino-acid sequence, 654 residues long: Pyoverdine export ATP-binding/permease protein PvdT (654 aa).

Positions 6–245 (IELCDIRKAY…QPEQLQANDL (240 aa)) constitute an ABC transporter domain. 43 to 50 (GASGSGKS) is a binding site for ATP. 4 helical membrane-spanning segments follow: residues 282-302 (ALTL…LAVG), 529-549 (LSLM…IGVM), 596-616 (IVIA…VAFA), and 617-637 (LPAI…FGFM).

The protein belongs to the ABC transporter superfamily. Macrolide exporter (TC 3.A.1.122) family. As to quaternary structure, part of the tripartite efflux system PvdRT-OpmQ, which is composed of an inner membrane component with both ATPase and permease domains, PvdT, a periplasmic membrane fusion protein, PvdR, and an outer membrane component, OpmQ.

It is found in the cell inner membrane. Part of the tripartite efflux system PvdRT-OpmQ required for the secretion into the extracellular milieu of the siderophore pyoverdine (PVD), which is involved in iron acquisition. This subunit binds PVD and drives its secretion by hydrolyzing ATP. The system is responsible for export of newly synthesized PVD after the final steps of biosynthesis have taken place in the periplasm. It is also responsible for recycling of PVD after internalization of ferri-PVD into the periplasm by the outer-membrane receptor FpvA and release of iron from PVD, thus making PVD available for new cycles of iron uptake. In Pseudomonas entomophila (strain L48), this protein is Pyoverdine export ATP-binding/permease protein PvdT.